Reading from the N-terminus, the 407-residue chain is Imidazolonepropionase (407 aa).

Fe(3+) contacts are provided by H68 and H70. 2 residues coordinate Zn(2+): H68 and H70. R77, Y140, and H173 together coordinate 4-imidazolone-5-propanoate. Y140 provides a ligand contact to N-formimidoyl-L-glutamate. Residue H238 coordinates Fe(3+). Position 238 (H238) interacts with Zn(2+). Residue Q241 participates in 4-imidazolone-5-propanoate binding. Residue D313 coordinates Fe(3+). D313 is a Zn(2+) binding site. The N-formimidoyl-L-glutamate site is built by N315 and G317. T318 is a binding site for 4-imidazolone-5-propanoate.

It belongs to the metallo-dependent hydrolases superfamily. HutI family. It depends on Zn(2+) as a cofactor. Requires Fe(3+) as cofactor.

Its subcellular location is the cytoplasm. The enzyme catalyses 4-imidazolone-5-propanoate + H2O = N-formimidoyl-L-glutamate. It participates in amino-acid degradation; L-histidine degradation into L-glutamate; N-formimidoyl-L-glutamate from L-histidine: step 3/3. In terms of biological role, catalyzes the hydrolytic cleavage of the carbon-nitrogen bond in imidazolone-5-propanoate to yield N-formimidoyl-L-glutamate. It is the third step in the universal histidine degradation pathway. This Burkholderia mallei (strain ATCC 23344) protein is Imidazolonepropionase.